The sequence spans 136 residues: Histone H3.2 (136 aa).

Residues 1–43 form a disordered region; that stretch reads MARTKQTARKSTGGKAPRKQLATKAARKSAPATGGVKKPHRFR. Lys5 and Lys10 each carry N6,N6,N6-trimethyllysine; alternate. Residues Lys5 and Lys10 each carry the N6,N6-dimethyllysine; alternate modification. An N6-methyllysine; alternate mark is found at Lys5 and Lys10. Position 10 is an N6-acetyllysine; alternate (Lys10). A Phosphoserine modification is found at Ser11. Thr12 is subject to Phosphothreonine. Lys15 is subject to N6-acetyllysine. Residues Lys19, Lys24, and Lys28 each carry the N6-methyllysine; alternate modification. An N6-acetyllysine; alternate mark is found at Lys19 and Lys24. N6,N6,N6-trimethyllysine; alternate is present on Lys28. Lys28 carries the N6,N6-dimethyllysine; alternate modification. Ser29 bears the Phosphoserine mark. Lys37 is modified (N6,N6,N6-trimethyllysine; alternate). Lys37 carries the N6,N6-dimethyllysine; alternate modification. Position 37 is an N6-methyllysine; alternate (Lys37).

It belongs to the histone H3 family. As to quaternary structure, the nucleosome is a histone octamer containing two molecules each of H2A, H2B, H3 and H4 assembled in one H3-H4 heterotetramer and two H2A-H2B heterodimers. The octamer wraps approximately 147 bp of DNA. In terms of processing, acetylation is generally linked to gene activation. Can be acetylated to form H3K9ac, H3K14ac, H3K18ac and H3K23ac. H3K9ac could compete with H3K9me and prevent gene silencing. H3K9ac is restricted to euchromatin. Post-translationally, methylated to form mainly H3K4me, H3K9me, H3K18me, H3K23me, H3K27me and H3K36me. H3K4me1/2/3, H3K9me3, H3K27me3 and H3K36me1/2/3 are typical marks for euchromatin, whereas heterochromatic chromocenters are enriched in H3K9me1/2 and H3K27me1/2. H2BK143ub1 is probably prerequisite for H3K4me. Can be phosphorylated to form H3S10ph, H3T11ph and H3S28ph.

The protein resides in the nucleus. The protein localises to the chromosome. In terms of biological role, core component of nucleosome. Nucleosomes wrap and compact DNA into chromatin, limiting DNA accessibility to the cellular machineries which require DNA as a template. Histones thereby play a central role in transcription regulation, DNA repair, DNA replication and chromosomal stability. DNA accessibility is regulated via a complex set of post-translational modifications of histones, also called histone code, and nucleosome remodeling. The protein is Histone H3.2 of Brassica napus (Rape).